The sequence spans 185 residues: Dihydrofolate reductase 1 (185 aa).

One can recognise a DHFR domain in the interval 8 to 185 (ELVLVVAADE…QASPRPLDDL (178 aa)).

This sequence belongs to the dihydrofolate reductase family.

The catalysed reaction is (6S)-5,6,7,8-tetrahydrofolate + NADP(+) = 7,8-dihydrofolate + NADPH + H(+). It participates in cofactor biosynthesis; tetrahydrofolate biosynthesis; 5,6,7,8-tetrahydrofolate from 7,8-dihydrofolate: step 1/1. In terms of biological role, key enzyme in folate metabolism. Catalyzes an essential reaction for de novo glycine and purine synthesis, and for DNA precursor synthesis. This chain is Dihydrofolate reductase 1 (folA1), found in Haloarcula marismortui (strain ATCC 43049 / DSM 3752 / JCM 8966 / VKM B-1809) (Halobacterium marismortui).